The following is a 220-amino-acid chain: Adenylate kinase (220 aa).

10-15 (GSGKST) is an ATP binding site. Residues 30–59 (SSGDLIRKEIAEGTPLGREMQAYLARGDLI) form an NMP region. Residues Ser31, Arg36, 57 to 59 (DLI), 83 to 86 (GYPR), and Gln90 each bind AMP. Residues 124–161 (GRRICPKCGAVYHVEFNPPKIPGRCDVCGAELVQREDD) are LID. Residue Arg125 coordinates ATP. Zn(2+)-binding residues include Cys128 and Cys131. 134 to 135 (VY) provides a ligand contact to ATP. Residues Cys148 and Cys151 each contribute to the Zn(2+) site. Residues Arg158 and Arg169 each contribute to the AMP site. Gly197 contacts ATP.

This sequence belongs to the adenylate kinase family. Monomer.

The protein localises to the cytoplasm. It carries out the reaction AMP + ATP = 2 ADP. The protein operates within purine metabolism; AMP biosynthesis via salvage pathway; AMP from ADP: step 1/1. Catalyzes the reversible transfer of the terminal phosphate group between ATP and AMP. Plays an important role in cellular energy homeostasis and in adenine nucleotide metabolism. This is Adenylate kinase from Pyrococcus furiosus (strain ATCC 43587 / DSM 3638 / JCM 8422 / Vc1).